The primary structure comprises 145 residues: Early nodulin-like protein 21 (145 aa).

Residues 1-17 (MFLWLVIVLTISASVSS) form the signal peptide. The Phytocyanin domain maps to 18–116 (YEHKLNWVVP…GQKMIVEVIS (99 aa)). N-linked (GlcNAc...) asparagine glycosylation is found at Asn-30 and Asn-71. Cys-70 and Cys-104 are joined by a disulfide. Ser-116 carries the GPI-anchor amidated serine lipid modification. A propeptide spans 117 to 145 (RDHTTTSAAPPAAFAVLLCFFSLSLYFVA) (removed in mature form).

It belongs to the early nodulin-like (ENODL) family. In terms of tissue distribution, mostly expressed in leaves and flowers, and, to a lower extent, in roots and stems, but barely in seedlings and seeds.

The protein localises to the cell membrane. Functionally, may act as a carbohydrate transporter. The protein is Early nodulin-like protein 21 of Arabidopsis thaliana (Mouse-ear cress).